Here is a 119-residue protein sequence, read N- to C-terminus: Large ribosomal subunit protein bL20 (119 aa).

The protein belongs to the bacterial ribosomal protein bL20 family.

In terms of biological role, binds directly to 23S ribosomal RNA and is necessary for the in vitro assembly process of the 50S ribosomal subunit. It is not involved in the protein synthesizing functions of that subunit. The polypeptide is Large ribosomal subunit protein bL20 (Alkaliphilus metalliredigens (strain QYMF)).